A 396-amino-acid polypeptide reads, in one-letter code: Diels-Alderase mpsD (396 aa).

This sequence belongs to the Diels-Alderase family.

It participates in secondary metabolite biosynthesis. Diels-Alderase; part of the gene cluster that mediates the biosynthesis of macrophasetins, 3-decalinoyltetramic acids (DTAs) which feature a tetramate (pyrrolidine-2,4-dione) unit connected to a decalin fragment and that have potent bioactivities. The PKS-NRPS mpsA together with its associated enoylreductase partner mpsG incorporate one unit of acetyl-CoA, seven units of malonyl-CoA, and one unit of L-alanine to assemble the linear tetramic acid intermediate corresponding to the backbone of macrophasetins. Without the Diels-Alderase mpsD, the mpsA/G product can undergo the non-enzymatic intramolecular Diels-Alder (IMDA) reaction to generate both macrophasetin A and macrophasetin B. Catalyzed by mpsD, the linear tetramic acid intermediate is thoroughly converted to macrophasetin A via the endo-IMDA reaction in a regioselective and stereoselective manner. Finally, the cytochrome P450 monooxygenase mpsF catalyzes the hydroxylation at C20 to yield the end product macrophasetin C. The protein is Diels-Alderase mpsD of Macrophomina phaseolina (strain MS6) (Charcoal rot fungus).